The primary structure comprises 240 residues: Ribonuclease HII (240 aa).

One can recognise an RNase H type-2 domain in the interval 27–226; the sequence is GPVAGVDEAG…REARSLRLED (200 aa). Residues Asp33, Glu34, and Asp127 each coordinate a divalent metal cation.

This sequence belongs to the RNase HII family. It depends on Mn(2+) as a cofactor. Mg(2+) serves as cofactor.

Its subcellular location is the cytoplasm. The catalysed reaction is Endonucleolytic cleavage to 5'-phosphomonoester.. Its function is as follows. Endonuclease that specifically degrades the RNA of RNA-DNA hybrids. The sequence is that of Ribonuclease HII from Frankia casuarinae (strain DSM 45818 / CECT 9043 / HFP020203 / CcI3).